A 252-amino-acid chain; its full sequence is Protein UL24 homolog (252 aa).

The disordered stretch occupies residues 211–252; that stretch reads KASKSVLTKTSGENRSRASRQVAKNAPKNRIRRTAKKDAKRQ. The segment covering 212–223 has biased composition (polar residues); the sequence is ASKSVLTKTSGE. Over residues 237 to 252 the composition is skewed to basic residues; it reads PKNRIRRTAKKDAKRQ.

It belongs to the herpesviridae UL24 family.

It localises to the virion. It is found in the host cytoplasm. The protein resides in the host nucleus. Its subcellular location is the host nucleolus. The protein localises to the host Golgi apparatus. In terms of biological role, may participate in nuclear egress of viral particles. Plays a role in the dispersal of several host nucleolar proteins including NCL/nucleolin and NPM1. Since deletion of host NCL/nucleolin negatively impact on nuclear egress, UL24 supposedly acts on this process through its effect on host nucleoli. The protein is Protein UL24 homolog (U49) of Homo sapiens (Human).